A 226-amino-acid polypeptide reads, in one-letter code: 2-C-methyl-D-erythritol 4-phosphate cytidylyltransferase (226 aa).

This sequence belongs to the IspD/TarI cytidylyltransferase family. IspD subfamily.

It carries out the reaction 2-C-methyl-D-erythritol 4-phosphate + CTP + H(+) = 4-CDP-2-C-methyl-D-erythritol + diphosphate. It functions in the pathway isoprenoid biosynthesis; isopentenyl diphosphate biosynthesis via DXP pathway; isopentenyl diphosphate from 1-deoxy-D-xylulose 5-phosphate: step 2/6. Functionally, catalyzes the formation of 4-diphosphocytidyl-2-C-methyl-D-erythritol from CTP and 2-C-methyl-D-erythritol 4-phosphate (MEP). The polypeptide is 2-C-methyl-D-erythritol 4-phosphate cytidylyltransferase (Rhodococcus jostii (strain RHA1)).